We begin with the raw amino-acid sequence, 537 residues long: Formimidoyltransferase-cyclodeaminase (537 aa).

The formiminotransferase N-subdomain stretch occupies residues Met-1–Phe-181. The active-site For formimidoyltransferase activity is His-82. A folate-binding site is contributed by Gly-163 to Gly-172. A formiminotransferase C-subdomain region spans residues Leu-182 to Val-326. Positions Gln-327–Pro-335 are linker. The cyclodeaminase/cyclohydrolase stretch occupies residues Leu-336 to Glu-537. The active-site For cyclodeaminase activity is Asp-413.

The protein in the C-terminal section; belongs to the cyclodeaminase/cyclohydrolase family. It in the N-terminal section; belongs to the formiminotransferase family. Homooctamer, including four polyglutamate binding sites. The subunits are arranged as a tetramer of dimers, and form a planar ring-shaped structure.

Its subcellular location is the cytoplasm. It localises to the cytosol. It is found in the golgi apparatus. The protein localises to the cytoskeleton. The protein resides in the microtubule organizing center. Its subcellular location is the centrosome. It localises to the centriole. The catalysed reaction is 5-formimidoyltetrahydrofolate + L-glutamate = N-formimidoyl-L-glutamate + (6S)-5,6,7,8-tetrahydrofolate. It catalyses the reaction 5-formimidoyltetrahydrofolate + 2 H(+) = (6R)-5,10-methenyltetrahydrofolate + NH4(+). It functions in the pathway amino-acid degradation; L-histidine degradation into L-glutamate; L-glutamate from N-formimidoyl-L-glutamate (transferase route): step 1/1. Its function is as follows. Folate-dependent enzyme, that displays both transferase and deaminase activity. Serves to channel one-carbon units from formiminoglutamate to the folate pool. In Dictyostelium discoideum (Social amoeba), this protein is Formimidoyltransferase-cyclodeaminase (ftcd).